A 611-amino-acid polypeptide reads, in one-letter code: Vitamin B12 transporter BtuB (611 aa).

The N-terminal stretch at 1–22 is a signal peptide; that stretch reads MQKSALAIALASLLTPISYLHA. The short motif at 29 to 36 is the TonB box element; it reads ETVVVTAN. Residues 41 to 154 form the TBDR plug domain; that stretch reads KASSTLADVE…IGGVINIITK (114 aa). One can recognise a TBDR beta-barrel domain in the interval 159–611; the sequence is QQGTTVSAGL…AYYLNIGYQF (453 aa). Positions 594 to 611 match the TonB C-terminal box motif; sequence NGYPAAERAYYLNIGYQF.

Belongs to the TonB-dependent receptor family. BtuB (TC 1.B.14.3.1) subfamily.

The protein localises to the cell outer membrane. Its function is as follows. Involved in the active translocation of vitamin B12 (cyanocobalamin) across the outer membrane to the periplasmic space. It derives its energy for transport by interacting with the trans-periplasmic membrane protein TonB. This chain is Vitamin B12 transporter BtuB, found in Vibrio cholerae serotype O1 (strain ATCC 39541 / Classical Ogawa 395 / O395).